A 604-amino-acid chain; its full sequence is 3-hydroxy-3-methylglutaryl-coenzyme A reductase 2 (604 aa).

2 helical membrane-spanning segments follow: residues 47–67 (LPLYFTNGLFFTMFFSVMYFL) and 91–111 (AIVSLIASVIYLLGFFGIGFV). The interval 112–188 (QTFVARGNND…APLVTPAASE (77 aa)) is linker. The N-linked (GlcNAc...) asparagine glycan is linked to Asn120. Positions 189-604 (EDEEIIKSVV…STKDVTKASS (416 aa)) are catalytic. Glu283 functions as the Charge relay system in the catalytic mechanism. Residue Asn347 is glycosylated (N-linked (GlcNAc...) asparagine). The active-site Charge relay system is Lys415. The N-linked (GlcNAc...) asparagine glycan is linked to Asn460. Catalysis depends on Asp491, which acts as the Charge relay system. His589 serves as the catalytic Proton donor. N-linked (GlcNAc...) asparagine glycosylation is present at Asn593.

The protein belongs to the HMG-CoA reductase family.

The protein localises to the endoplasmic reticulum membrane. It carries out the reaction (R)-mevalonate + 2 NADP(+) + CoA = (3S)-3-hydroxy-3-methylglutaryl-CoA + 2 NADPH + 2 H(+). Its pathway is metabolic intermediate biosynthesis; (R)-mevalonate biosynthesis; (R)-mevalonate from acetyl-CoA: step 3/3. In terms of biological role, catalyzes the synthesis of mevalonate. The specific precursor of all isoprenoid compounds present in plants. The polypeptide is 3-hydroxy-3-methylglutaryl-coenzyme A reductase 2 (HMGR2) (Capsicum annuum (Capsicum pepper)).